Consider the following 775-residue polypeptide: Dipeptidyl peptidase 4 (775 aa).

A signal peptide spans 1 to 15; sequence MKFLSLLLLVGVAQA. 3 N-linked (GlcNAc...) asparagine glycosylation sites follow: Asn-81, Asn-111, and Asn-219. Catalysis depends on charge relay system residues Ser-613, Asp-690, and His-725. Asn-731 is a glycosylation site (N-linked (GlcNAc...) asparagine).

It belongs to the peptidase S9B family.

Its subcellular location is the secreted. It carries out the reaction Release of an N-terminal dipeptide, Xaa-Yaa-|-Zaa-, from a polypeptide, preferentially when Yaa is Pro, provided Zaa is neither Pro nor hydroxyproline.. In terms of biological role, extracellular dipeptidyl-peptidase which removes N-terminal dipeptides sequentially from polypeptides having unsubstituted N-termini provided that the penultimate residue is proline. Contributes to pathogenicity. This is Dipeptidyl peptidase 4 (DPP4) from Arthroderma otae (strain ATCC MYA-4605 / CBS 113480) (Microsporum canis).